Reading from the N-terminus, the 50-residue chain is Small nuclear ribonucleoprotein Sm D2 (50 aa).

Residues 1 to 36 are disordered; it reads MSLLNKPKSEMTPEELQKREEEEFNTGPLSVXTQSX. Serine 2 is modified (N-acetylserine). Residues lysine 6 and lysine 8 each participate in a glycyl lysine isopeptide (Lys-Gly) (interchain with G-Cter in SUMO2) cross-link. The span at 7-21 shows a compositional bias: basic and acidic residues; it reads PKSEMTPEELQKREE. Phosphoserine is present on serine 9. Threonine 12 is modified (phosphothreonine).

This sequence belongs to the snRNP core protein family. In terms of assembly, core component of the spliceosomal U1, U2, U4 and U5 small nuclear ribonucleoproteins (snRNPs), the building blocks of the spliceosome. Most spliceosomal snRNPs contain a common set of Sm proteins, SNRPB, SNRPD1, SNRPD2, SNRPD3, SNRPE, SNRPF and SNRPG that assemble in a heptameric protein ring on the Sm site of the small nuclear RNA to form the core snRNP. Component of the U1 snRNP. The U1 snRNP is composed of the U1 snRNA and the 7 core Sm proteins SNRPB, SNRPD1, SNRPD2, SNRPD3, SNRPE, SNRPF and SNRPG, and at least three U1 snRNP-specific proteins SNRNP70/U1-70K, SNRPA/U1-A and SNRPC/U1-C. Component of the U4/U6-U5 tri-snRNP complex composed of the U4, U6 and U5 snRNAs and at least PRPF3, PRPF4, PRPF6, PRPF8, PRPF31, SNRNP200, TXNL4A, SNRNP40, SNRPB, SNRPD1, SNRPD2, SNRPD3, SNRPE, SNRPF, SNRPG, DDX23, CD2BP2, PPIH, SNU13, EFTUD2, SART1 and USP39, plus LSM2, LSM3, LSM4, LSM5, LSM6, LSM7 and LSM8. Component of the minor spliceosome, which splices U12-type introns. Part of the SMN-Sm complex that contains SMN1, GEMIN2/SIP1, DDX20/GEMIN3, GEMIN4, GEMIN5, GEMIN6, GEMIN7, GEMIN8, STRAP/UNRIP and the Sm proteins SNRPB, SNRPD1, SNRPD2, SNRPD3, SNRPE, SNRPF and SNRPG; catalyzes core snRNPs assembly. Forms a 6S pICln-Sm complex composed of CLNS1A/pICln, SNRPD1, SNRPD2, SNRPE, SNRPF and SNRPG; ring-like structure where CLNS1A/pICln mimics additional Sm proteins and which is unable to assemble into the core snRNP. Interacts with SMN1; the interaction is direct. Interacts with GEMIN2; the interaction is direct. Interacts with SNRPD1; the interaction is direct. Interacts with SNRPF; the interaction is direct.

It is found in the cytoplasm. It localises to the cytosol. The protein resides in the nucleus. Plays a role in pre-mRNA splicing as a core component of the spliceosomal U1, U2, U4 and U5 small nuclear ribonucleoproteins (snRNPs), the building blocks of the spliceosome. Component of both the pre-catalytic spliceosome B complex and activated spliceosome C complexes. As a component of the minor spliceosome, involved in the splicing of U12-type introns in pre-mRNAs. This Sus scrofa (Pig) protein is Small nuclear ribonucleoprotein Sm D2 (SNRPD2).